A 249-amino-acid chain; its full sequence is 23S rRNA (guanosine-2'-O-)-methyltransferase RlmB (249 aa).

Gly-200, Ile-220, and Leu-229 together coordinate S-adenosyl-L-methionine.

The protein belongs to the class IV-like SAM-binding methyltransferase superfamily. RNA methyltransferase TrmH family. RlmB subfamily.

The protein resides in the cytoplasm. It carries out the reaction guanosine(2251) in 23S rRNA + S-adenosyl-L-methionine = 2'-O-methylguanosine(2251) in 23S rRNA + S-adenosyl-L-homocysteine + H(+). Its function is as follows. Specifically methylates the ribose of guanosine 2251 in 23S rRNA. The protein is 23S rRNA (guanosine-2'-O-)-methyltransferase RlmB of Xanthomonas campestris pv. campestris (strain ATCC 33913 / DSM 3586 / NCPPB 528 / LMG 568 / P 25).